The sequence spans 364 residues: DNA replication and repair protein RecF (364 aa).

30–37 (GNNAQGKT) serves as a coordination point for ATP.

This sequence belongs to the RecF family.

The protein resides in the cytoplasm. Functionally, the RecF protein is involved in DNA metabolism; it is required for DNA replication and normal SOS inducibility. RecF binds preferentially to single-stranded, linear DNA. It also seems to bind ATP. This chain is DNA replication and repair protein RecF, found in Clostridium botulinum (strain ATCC 19397 / Type A).